The sequence spans 126 residues: Anti-adapter protein IraD (126 aa).

The protein belongs to the GpW/Gp25 family. IraD subfamily. As to quaternary structure, interacts with RssB.

Its subcellular location is the cytoplasm. In terms of biological role, inhibits RpoS proteolysis by regulating RssB activity, thereby increasing the stability of the sigma stress factor RpoS during oxidative stress. Its effect on RpoS stability is due to its interaction with RssB, which probably blocks the interaction of RssB with RpoS, and the consequent delivery of the RssB-RpoS complex to the ClpXP protein degradation pathway. The protein is Anti-adapter protein IraD of Salmonella enteritidis PT4 (strain P125109).